A 228-amino-acid chain; its full sequence is Phosphatidylserine decarboxylase proenzyme (228 aa).

Ser-197 functions as the Schiff-base intermediate with substrate; via pyruvic acid in the catalytic mechanism. Pyruvic acid (Ser); by autocatalysis is present on Ser-197.

Belongs to the phosphatidylserine decarboxylase family. PSD-A subfamily. As to quaternary structure, heterodimer of a large membrane-associated beta subunit and a small pyruvoyl-containing alpha subunit. Pyruvate serves as cofactor. Is synthesized initially as an inactive proenzyme. Formation of the active enzyme involves a self-maturation process in which the active site pyruvoyl group is generated from an internal serine residue via an autocatalytic post-translational modification. Two non-identical subunits are generated from the proenzyme in this reaction, and the pyruvate is formed at the N-terminus of the alpha chain, which is derived from the carboxyl end of the proenzyme. The post-translation cleavage follows an unusual pathway, termed non-hydrolytic serinolysis, in which the side chain hydroxyl group of the serine supplies its oxygen atom to form the C-terminus of the beta chain, while the remainder of the serine residue undergoes an oxidative deamination to produce ammonia and the pyruvoyl prosthetic group on the alpha chain.

It localises to the cell membrane. The catalysed reaction is a 1,2-diacyl-sn-glycero-3-phospho-L-serine + H(+) = a 1,2-diacyl-sn-glycero-3-phosphoethanolamine + CO2. The protein operates within phospholipid metabolism; phosphatidylethanolamine biosynthesis; phosphatidylethanolamine from CDP-diacylglycerol: step 2/2. Its function is as follows. Catalyzes the formation of phosphatidylethanolamine (PtdEtn) from phosphatidylserine (PtdSer). The protein is Phosphatidylserine decarboxylase proenzyme of Phocaeicola vulgatus (strain ATCC 8482 / DSM 1447 / JCM 5826 / CCUG 4940 / NBRC 14291 / NCTC 11154) (Bacteroides vulgatus).